The chain runs to 214 residues: Urease accessory protein UreG (214 aa).

23 to 30 (GPVGSGKT) contacts GTP.

The protein belongs to the SIMIBI class G3E GTPase family. UreG subfamily. As to quaternary structure, homodimer. UreD, UreF and UreG form a complex that acts as a GTP-hydrolysis-dependent molecular chaperone, activating the urease apoprotein by helping to assemble the nickel containing metallocenter of UreC. The UreE protein probably delivers the nickel.

The protein resides in the cytoplasm. In terms of biological role, facilitates the functional incorporation of the urease nickel metallocenter. This process requires GTP hydrolysis, probably effectuated by UreG. This chain is Urease accessory protein UreG, found in Bordetella pertussis (strain Tohama I / ATCC BAA-589 / NCTC 13251).